Here is a 1168-residue protein sequence, read N- to C-terminus: Transcription-repair-coupling factor (1168 aa).

One can recognise a Helicase ATP-binding domain in the interval 633 to 794 (DMQKSRPMDR…MLGVRDLSVI (162 aa)). ATP is bound at residue 646 to 653 (GDVGYGKT). The short motif at 747–750 (DEEQ) is the DEEQ box element. The Helicase C-terminal domain occupies 808 to 969 (VLEQNMSFIK…GFKIAMRDLN (162 aa)).

This sequence in the N-terminal section; belongs to the UvrB family. The protein in the C-terminal section; belongs to the helicase family. RecG subfamily.

The protein resides in the cytoplasm. Couples transcription and DNA repair by recognizing RNA polymerase (RNAP) stalled at DNA lesions. Mediates ATP-dependent release of RNAP and its truncated transcript from the DNA, and recruitment of nucleotide excision repair machinery to the damaged site. The chain is Transcription-repair-coupling factor from Staphylococcus aureus (strain bovine RF122 / ET3-1).